The following is a 461-amino-acid chain: Phosphomethylpyrimidine synthase (461 aa).

Residues asparagine 80, methionine 109, tyrosine 139, histidine 174, 194 to 196 (SRG), 235 to 238 (DSLR), and glutamate 274 contribute to the substrate site. Position 278 (histidine 278) interacts with Zn(2+). Tyrosine 301 serves as a coordination point for substrate. A Zn(2+)-binding site is contributed by histidine 342. [4Fe-4S] cluster-binding residues include cysteine 422, cysteine 425, and cysteine 430.

The protein belongs to the ThiC family. As to quaternary structure, homodimer. It depends on [4Fe-4S] cluster as a cofactor.

It carries out the reaction 5-amino-1-(5-phospho-beta-D-ribosyl)imidazole + S-adenosyl-L-methionine = 4-amino-2-methyl-5-(phosphooxymethyl)pyrimidine + CO + 5'-deoxyadenosine + formate + L-methionine + 3 H(+). The protein operates within cofactor biosynthesis; thiamine diphosphate biosynthesis. Its function is as follows. Catalyzes the synthesis of the hydroxymethylpyrimidine phosphate (HMP-P) moiety of thiamine from aminoimidazole ribotide (AIR) in a radical S-adenosyl-L-methionine (SAM)-dependent reaction. The polypeptide is Phosphomethylpyrimidine synthase (Nautilia profundicola (strain ATCC BAA-1463 / DSM 18972 / AmH)).